A 267-amino-acid chain; its full sequence is Lectin SfL-2 (267 aa).

Tandem repeats lie at residues 1–67, 68–135, 136–202, and 203–267. The segment at 1 to 267 is 4 X approximate tandem repeats; it reads GRYTVQNQWG…GPIGFKGVAN (267 aa).

Monomer.

Functionally, lectin specific for high mannose N-glycans, recognizes the branched moiety of these glycans. Does not recognize other types of N-glycans or monosaccharides. This chain is Lectin SfL-2, found in Solieria filiformis (Red alga).